Reading from the N-terminus, the 82-residue chain is Beta-insect toxin AaBTxL1 (82 aa).

The signal sequence occupies residues 1–22 (MMKLVLFSVIVILFSLIGSIHG). The region spanning 25-82 (VPGNYPLDRSGKKYPCTITWKKNPSCIQICKKHGVKYGYCFDFQCWCEIFGRLKTFKI) is the LCN-type CS-alpha/beta domain. Intrachain disulfides connect Cys40-Cys64, Cys50-Cys69, and Cys54-Cys71.

This sequence belongs to the long (3 C-C) scorpion toxin superfamily. Sodium channel inhibitor family. Beta subfamily. In terms of tissue distribution, expressed by the venom gland.

It is found in the secreted. Shifts the voltage of activation of para/tipE voltage-dependent sodium channels (Nav) toward more negative potentials. The chain is Beta-insect toxin AaBTxL1 from Androctonus australis (Sahara scorpion).